Consider the following 111-residue polypeptide: Large ribosomal subunit protein P1 (111 aa).

A compositionally biased stretch (low complexity) spans 65 to 89 (SGAGSGPAPAAAAAAPAAGGAAPAA). The interval 65 to 111 (SGAGSGPAPAAAAAAPAAGGAAPAAETKKKEEPKEESDDDMGFGLFD) is disordered.

It belongs to the eukaryotic ribosomal protein P1/P2 family. As to quaternary structure, P1 and P2 exist as dimers at the large ribosomal subunit.

Plays an important role in the elongation step of protein synthesis. The chain is Large ribosomal subunit protein P1 from Caenorhabditis elegans.